A 63-amino-acid polypeptide reads, in one-letter code: Small ribosomal subunit protein bS21 (63 aa).

The protein belongs to the bacterial ribosomal protein bS21 family.

The chain is Small ribosomal subunit protein bS21 from Parabacteroides distasonis (strain ATCC 8503 / DSM 20701 / CIP 104284 / JCM 5825 / NCTC 11152).